The primary structure comprises 626 residues: Serine/threonine-protein kinase PknH (626 aa).

Over 1–403 (MSDAQDSRVG…QTPRKTNPWP (403 aa)) the chain is Cytoplasmic. A Protein kinase domain is found at 16–276 (YHLKRLLGRG…DLALAAHEAL (261 aa)). ATP-binding positions include 22–30 (LGRGGMGEV) and lysine 45. Residue aspartate 139 is the Proton acceptor of the active site. Position 170 is a phosphothreonine (threonine 170). Positions 292 to 396 (QESTLPAPPK…GGPSPWAQTP (105 aa)) are disordered. Composition is skewed to pro residues over residues 297 to 308 (PAPPKPVPPPTM) and 316 to 342 (RQPP…PAQP). Residues 343–355 (GPAGQRPGPTGQP) show a composition bias toward low complexity. The chain crosses the membrane as a helical span at residues 404–424 (LVAGAAAVVLVLVLGAIGIWI). At 425 to 626 (AIRPKPVQPP…AKIVDKVNKE (202 aa)) the chain is on the extracellular side. 2 disulfides stabilise this stretch: cysteine 482/cysteine 545 and cysteine 587/cysteine 604.

This sequence belongs to the protein kinase superfamily. Ser/Thr protein kinase family. It depends on a divalent metal cation as a cofactor. Autophosphorylated on threonine and serine residues. Dephosphorylated by PstP.

The protein resides in the cell membrane. The enzyme catalyses L-seryl-[protein] + ATP = O-phospho-L-seryl-[protein] + ADP + H(+). The catalysed reaction is L-threonyl-[protein] + ATP = O-phospho-L-threonyl-[protein] + ADP + H(+). With respect to regulation, inhibited by the kinase inhibitors staurosporine and H-7. Its function is as follows. May regulate bacterial growth in response to external signals to facilitate adaptation to the host environment. In vitro, phosphorylates several substrates such as EmbR, DevR (DosR), DacB1 and Rv0681. The polypeptide is Serine/threonine-protein kinase PknH (pknH) (Mycobacterium tuberculosis (strain ATCC 25618 / H37Rv)).